We begin with the raw amino-acid sequence, 141 residues long: Protein stum homolog (141 aa).

Ser-26 is modified (phosphoserine). The next 2 helical transmembrane spans lie at 51–71 (FPVA…GTFV) and 87–107 (RHVC…VLTA).

The protein belongs to the SPEC3 family. Stum subfamily.

It localises to the membrane. This Mus musculus (Mouse) protein is Protein stum homolog.